Consider the following 439-residue polypeptide: Xylose isomerase (439 aa).

Active-site residues include His-101 and Asp-104. Positions 232, 268, 271, 296, 307, 309, and 339 each coordinate Mg(2+).

It belongs to the xylose isomerase family. In terms of assembly, homotetramer. It depends on Mg(2+) as a cofactor.

The protein resides in the cytoplasm. It carries out the reaction alpha-D-xylose = alpha-D-xylulofuranose. This Thermoanaerobacterium thermosaccharolyticum (strain ATCC 7956 / DSM 571 / NCIMB 9385 / NCA 3814 / NCTC 13789 / WDCM 00135 / 2032) (Clostridium thermosaccharolyticum) protein is Xylose isomerase (xylA).